We begin with the raw amino-acid sequence, 208 residues long: FMN-dependent NADH:quinone oxidoreductase (208 aa).

FMN-binding positions include 17–19 (SNS), 99–102 (MWNL), and 143–146 (SRGG).

This sequence belongs to the azoreductase type 1 family. As to quaternary structure, homodimer. The cofactor is FMN.

The enzyme catalyses 2 a quinone + NADH + H(+) = 2 a 1,4-benzosemiquinone + NAD(+). It carries out the reaction N,N-dimethyl-1,4-phenylenediamine + anthranilate + 2 NAD(+) = 2-(4-dimethylaminophenyl)diazenylbenzoate + 2 NADH + 2 H(+). Quinone reductase that provides resistance to thiol-specific stress caused by electrophilic quinones. In terms of biological role, also exhibits azoreductase activity. Catalyzes the reductive cleavage of the azo bond in aromatic azo compounds to the corresponding amines. This is FMN-dependent NADH:quinone oxidoreductase from Staphylococcus haemolyticus (strain JCSC1435).